The chain runs to 876 residues: Alanine--tRNA ligase (876 aa).

His-566, His-570, Cys-668, and His-672 together coordinate Zn(2+).

It belongs to the class-II aminoacyl-tRNA synthetase family. Zn(2+) is required as a cofactor.

It is found in the cytoplasm. The catalysed reaction is tRNA(Ala) + L-alanine + ATP = L-alanyl-tRNA(Ala) + AMP + diphosphate. Catalyzes the attachment of alanine to tRNA(Ala) in a two-step reaction: alanine is first activated by ATP to form Ala-AMP and then transferred to the acceptor end of tRNA(Ala). Also edits incorrectly charged Ser-tRNA(Ala) and Gly-tRNA(Ala) via its editing domain. The polypeptide is Alanine--tRNA ligase (Petrotoga mobilis (strain DSM 10674 / SJ95)).